The primary structure comprises 386 residues: Delta(7)-sterol 5(6)-desaturase ERG3 (386 aa).

The next 3 helical transmembrane spans lie at 120-140, 172-192, and 206-226; these read LSLF…VAYL, IPVM…GYSF, and AILW…YFLH. Residues 214 to 337 enclose the Fatty acid hydroxylase domain; that stretch reads FILFTDCGIY…FTTLWDRLGN (124 aa). The Histidine box-1 signature appears at 226-230; it reads HRWLH. The short motif at 239–243 is the Histidine box-2 element; sequence HKPHH. A helical membrane pass occupies residues 272–292; sequence PLLFPLHKVLYLFLFTFVNFW. The Histidine box-3 signature appears at 314–318; sequence HTVHH.

The protein belongs to the sterol desaturase family. Fe cation is required as a cofactor.

The protein resides in the endoplasmic reticulum membrane. It catalyses the reaction a Delta(7)-sterol + 2 Fe(II)-[cytochrome b5] + O2 + 2 H(+) = a Delta(5),Delta(7)-sterol + 2 Fe(III)-[cytochrome b5] + 2 H2O. It functions in the pathway steroid metabolism; ergosterol biosynthesis; ergosterol from zymosterol: step 3/5. C-5 sterol desaturase; part of the third module of ergosterol biosynthesis pathway that includes the late steps of the pathwa. ERG3 catalyzes the introduction of a C-5 double bond in the B ring to produce 5-dehydroepisterol. The third module or late pathway involves the ergosterol synthesis itself through consecutive reactions that mainly occur in the endoplasmic reticulum (ER) membrane. Firstly, the squalene synthase ERG9 catalyzes the condensation of 2 farnesyl pyrophosphate moieties to form squalene, which is the precursor of all steroids. Squalene synthase is crucial for balancing the incorporation of farnesyl diphosphate (FPP) into sterol and nonsterol isoprene synthesis. Secondly, the squalene epoxidase ERG1 catalyzes the stereospecific oxidation of squalene to (S)-2,3-epoxysqualene, which is considered to be a rate-limiting enzyme in steroid biosynthesis. Then, the lanosterol synthase ERG7 catalyzes the cyclization of (S)-2,3 oxidosqualene to lanosterol, a reaction that forms the sterol core. In the next steps, lanosterol is transformed to zymosterol through a complex process involving various demethylation, reduction and desaturation reactions. The lanosterol 14-alpha-demethylase ERG11 (also known as CYP51) catalyzes C14-demethylation of lanosterol to produce 4,4'-dimethyl cholesta-8,14,24-triene-3-beta-ol, which is critical for ergosterol biosynthesis. The C-14 reductase ERG24 reduces the C14=C15 double bond of 4,4-dimethyl-cholesta-8,14,24-trienol to produce 4,4-dimethyl-cholesta-8,24-dienol. 4,4-dimethyl-cholesta-8,24-dienol is substrate of the C-4 demethylation complex ERG25-ERG26-ERG27 in which ERG25 catalyzes the three-step monooxygenation required for the demethylation of 4,4-dimethyl and 4alpha-methylsterols, ERG26 catalyzes the oxidative decarboxylation that results in a reduction of the 3-beta-hydroxy group at the C-3 carbon to an oxo group, and ERG27 is responsible for the reduction of the keto group on the C-3. ERG28 has a role as a scaffold to help anchor ERG25, ERG26 and ERG27 to the endoplasmic reticulum and ERG29 regulates the activity of the iron-containing C4-methylsterol oxidase ERG25. Then, the sterol 24-C-methyltransferase ERG6 catalyzes the methyl transfer from S-adenosyl-methionine to the C-24 of zymosterol to form fecosterol. The C-8 sterol isomerase ERG2 catalyzes the reaction which results in unsaturation at C-7 in the B ring of sterols and thus converts fecosterol to episterol. The sterol-C5-desaturase ERG3 then catalyzes the introduction of a C-5 double bond in the B ring to produce 5-dehydroepisterol. The C-22 sterol desaturase ERG5 further converts 5-dehydroepisterol into ergosta-5,7,22,24(28)-tetraen-3beta-ol by forming the C-22(23) double bond in the sterol side chain. Finally, ergosta-5,7,22,24(28)-tetraen-3beta-ol is substrate of the C-24(28) sterol reductase ERG4 to produce ergosterol. In Candida albicans (strain SC5314 / ATCC MYA-2876) (Yeast), this protein is Delta(7)-sterol 5(6)-desaturase ERG3.